We begin with the raw amino-acid sequence, 537 residues long: Phosphoenolpyruvate carboxykinase (ATP) (537 aa).

The substrate site is built by R61, Y195, and K201. Residues K201, H220, and 236 to 244 each bind ATP; that span reads GLSGTGKTT. Mn(2+) is bound by residues K201 and H220. D257 contributes to the Mn(2+) binding site. 3 residues coordinate ATP: E285, R323, and T448. Residue R323 participates in substrate binding.

This sequence belongs to the phosphoenolpyruvate carboxykinase (ATP) family. Mn(2+) serves as cofactor.

The protein resides in the cytoplasm. It catalyses the reaction oxaloacetate + ATP = phosphoenolpyruvate + ADP + CO2. Its pathway is carbohydrate biosynthesis; gluconeogenesis. In terms of biological role, involved in the gluconeogenesis. Catalyzes the conversion of oxaloacetate (OAA) to phosphoenolpyruvate (PEP) through direct phosphoryl transfer between the nucleoside triphosphate and OAA. This chain is Phosphoenolpyruvate carboxykinase (ATP), found in Parvibaculum lavamentivorans (strain DS-1 / DSM 13023 / NCIMB 13966).